A 482-amino-acid polypeptide reads, in one-letter code: PHD finger protein At3g20280 (482 aa).

A PHD-type zinc finger spans residues 45-97 (AMACQICEVTINEMDTLLICDACEKAYHLKCLQGNNMKGVPKSEWHCSRCVQA). Disordered stretches follow at residues 188–210 (TNIG…APVS) and 314–482 (SSNS…ENAA). A compositionally biased stretch (low complexity) spans 314-324 (SSNSQQAVSHS). 2 stretches are compositionally biased toward polar residues: residues 377-386 (ACQNHPTASP) and 393-428 (QDST…NYDS). The segment covering 447 to 482 (DSEKGKGLNGLDDRHQEQPSEPEFYKSDSVKEENAA) has biased composition (basic and acidic residues).

This chain is PHD finger protein At3g20280, found in Arabidopsis thaliana (Mouse-ear cress).